Consider the following 122-residue polypeptide: ATP-dependent Clp protease adapter protein ClpS (122 aa).

It belongs to the ClpS family. As to quaternary structure, binds to the N-terminal domain of the chaperone ClpA.

Involved in the modulation of the specificity of the ClpAP-mediated ATP-dependent protein degradation. This is ATP-dependent Clp protease adapter protein ClpS from Pseudomonas fluorescens (strain SBW25).